The chain runs to 89 residues: uncharacterized protein (89 aa).

Helical transmembrane passes span 1-21 (MFLA…ISLI) and 28-48 (GISL…TIAA).

Its subcellular location is the cell membrane. This is an uncharacterized protein from Methanocaldococcus jannaschii (strain ATCC 43067 / DSM 2661 / JAL-1 / JCM 10045 / NBRC 100440) (Methanococcus jannaschii).